The following is a 336-amino-acid chain: uncharacterized protein (336 aa).

The first 23 residues, Met1–Glu23, serve as a signal peptide directing secretion. The next 3 helical transmembrane spans lie at Leu34–Gly54, Val75–Thr95, and Val106–Tyr126. One can recognise a PINc domain in the interval Val144 to Leu255. Asp222 is a binding site for Mg(2+). A TRAM domain is found at Gln267–Phe328.

This sequence belongs to the PINc/VapC protein family. Mg(2+) is required as a cofactor.

The protein resides in the membrane. Functionally, part of a toxin-antitoxin (TA) system. An RNase. This is an uncharacterized protein from Thermus thermophilus (strain ATCC 27634 / DSM 579 / HB8).